Here is a 121-residue protein sequence, read N- to C-terminus: uncharacterized protein (121 aa).

Residues 8 to 37 (KQLMVCRDEIKKLKLKEKEAKNRILTYLKN) adopt a coiled-coil conformation.

This is an uncharacterized protein from Aedes vexans (Inland floodwater mosquito).